The sequence spans 126 residues: MPTIQQLVRSRRIQIKKKTKSPALVNCPQRRGVCTRVYTTTPKKPNSAIRKVARVRLTSDLKVTAYIPGIGHNLQEHSVVLIRGGRVKDLPGVRYHIIRGALDSVGVKDRTQGRSKYGVKKPKSDK.

Belongs to the universal ribosomal protein uS12 family. In terms of assembly, part of the 30S ribosomal subunit.

The protein resides in the plastid. Its subcellular location is the chloroplast. Functionally, with S4 and S5 plays an important role in translational accuracy. Located at the interface of the 30S and 50S subunits. The sequence is that of Small ribosomal subunit protein uS12c (rps12) from Trieres chinensis (Marine centric diatom).